The following is a 292-amino-acid chain: 5,10-methylenetetrahydrofolate reductase (292 aa).

Catalysis depends on Glu-28, which acts as the Proton donor/acceptor. Residue Thr-59 participates in NADH binding. Positions 60, 62, 88, 118, 119, 120, 132, 152, 156, 165, 168, 171, and 172 each coordinate FAD. Asp-120 serves as a coordination point for (6S)-5-methyl-5,6,7,8-tetrahydrofolate. Gln-183 serves as a coordination point for NADH. Residue Gln-183 coordinates (6S)-5-methyl-5,6,7,8-tetrahydrofolate.

It belongs to the methylenetetrahydrofolate reductase family. FAD is required as a cofactor.

The catalysed reaction is (6S)-5-methyl-5,6,7,8-tetrahydrofolate + NAD(+) = (6R)-5,10-methylene-5,6,7,8-tetrahydrofolate + NADH + H(+). It participates in one-carbon metabolism; tetrahydrofolate interconversion. It functions in the pathway amino-acid biosynthesis; L-methionine biosynthesis via de novo pathway. Its function is as follows. Catalyzes the NADH-dependent reduction of 5,10-methylenetetrahydrofolate to 5-methyltetrahydrofolate. Is required to provide the methyl group necessary for methionine synthetase to convert homocysteine to methionine; the methyl group is given by 5-methyltetrahydrofolate. The protein is 5,10-methylenetetrahydrofolate reductase (metF) of Buchnera aphidicola subsp. Acyrthosiphon pisum (strain APS) (Acyrthosiphon pisum symbiotic bacterium).